A 1028-amino-acid polypeptide reads, in one-letter code: Ubiquitin conjugation factor E4 A (1028 aa).

The interval 33–57 is disordered; it reads KEQLKQQSDELPASPDDSDNSVSES. K386 carries the N6-acetyllysine modification. Residues 949–1023 enclose the U-box domain; the sequence is DACDEFLDPI…QRWLAERKQQ (75 aa).

It belongs to the ubiquitin conjugation factor E4 family. Expressed in liver, heart, brain, kidney and testis.

The protein localises to the cytoplasm. The enzyme catalyses S-ubiquitinyl-[E2 ubiquitin-conjugating enzyme]-L-cysteine + [acceptor protein]-L-lysine = [E2 ubiquitin-conjugating enzyme]-L-cysteine + N(6)-ubiquitinyl-[acceptor protein]-L-lysine.. It functions in the pathway protein modification; protein ubiquitination. Its function is as follows. Ubiquitin-protein ligase that probably functions as an E3 ligase in conjunction with specific E1 and E2 ligases. May also function as an E4 ligase mediating the assembly of polyubiquitin chains on substrates ubiquitinated by another E3 ubiquitin ligase. Mediates 'Lys-48'-linked polyubiquitination of substrates. The polypeptide is Ubiquitin conjugation factor E4 A (Mus musculus (Mouse)).